Here is a 2637-residue protein sequence, read N- to C-terminus: Nonribisomal peptide synthetase valB (2637 aa).

The tract at residues 1–376 is condensation 1; sequence MADGADYTQR…KALIRSPPST (376 aa). The adenylation 1 stretch occupies residues 413 to 803; it reads SQASRRPDAA…VGRRDNQIKL (391 aa). In terms of domain architecture, Carrier 1 spans 946–1022; the sequence is PPANPPERAL…EAASEIKEPT (77 aa). Ser-983 carries the post-translational modification O-(pantetheine 4'-phosphoryl)serine. The tract at residues 1016-1045 is disordered; it reads SEIKEPTDASAPSPSPISRDLPLQKSNHDR. A condensation 2 region spans residues 1063 to 1506; the sequence is VEAIYPCTAL…LSRADMSLLQ (444 aa). The adenylation 2 stretch occupies residues 1524-1933; it reads AREVAHQRPL…EGRKDTRVKL (410 aa). Positions 2078 to 2154 constitute a Carrier 2 domain; the sequence is KEVTDDQAFM…YMVSKTSVSN (77 aa). O-(pantetheine 4'-phosphoryl)serine is present on Ser-2115. The segment at 2193 to 2582 is condensation 3; that stretch reads ESVAPATDAQ…LWMGAYLDAA (390 aa).

It belongs to the NRP synthetase family.

Its pathway is secondary metabolite biosynthesis. Its function is as follows. Nonribisomal peptide synthetase; part of the gene cluster that mediates the biosynthesis of valactamides. The first step of the pathway is performed by the highly reducing polyketide synthase valA that produces the polyketide part of the final products. An acetyl starter unit is incorporated by the ketosynthase domain of valA, and subsequently 6 malonyl-CoA-derived ketide units are incorporated and fully reduced to their respective alkane forms by the action of the ketoreductase, dehydratase, and enoylreductase domains (except for the penultimate unit, which is reduced only to the alkene). The final five ketide units are each proposed to be alpha-methylated by the methyltransferase domain before ketone reduction by the ketoreductase domain. The C1 domain of the nonribisomal peptide synthetase valB then catalyzes amide bond formation between the heptaketide chain and L-valine (L-Val) attached to the T1 domain. The C2 domain incorporating L-isoleucine (L-Ile) then carries out chain elongation, which is followed by macrolactonization by the Ct domain to release the final product. The chain is Nonribisomal peptide synthetase valB from Aspergillus terreus.